Reading from the N-terminus, the 491-residue chain is Ribonuclease Y (491 aa).

The chain crosses the membrane as a helical span at residues 4–24; sequence LIATVGVVAVAALVIAIFVVI. The 67-residue stretch at 181 to 247 folds into the KH domain; it reads VVSVVHLPGD…RVALERLVDD (67 aa). The region spanning 307 to 400 is the HD domain; it reads VLKHLVETAH…TQAADAISGG (94 aa).

This sequence belongs to the RNase Y family.

Its subcellular location is the cell membrane. Its function is as follows. Endoribonuclease that initiates mRNA decay. This Acidothermus cellulolyticus (strain ATCC 43068 / DSM 8971 / 11B) protein is Ribonuclease Y.